Reading from the N-terminus, the 257-residue chain is Triosephosphate isomerase (257 aa).

9–11 (NWK) contributes to the substrate binding site. H95 (electrophile) is an active-site residue. The active-site Proton acceptor is the E168. Substrate contacts are provided by residues G174, S213, and 234 to 235 (GG).

This sequence belongs to the triosephosphate isomerase family. In terms of assembly, homodimer.

The protein resides in the cytoplasm. The enzyme catalyses D-glyceraldehyde 3-phosphate = dihydroxyacetone phosphate. The protein operates within carbohydrate biosynthesis; gluconeogenesis. Its pathway is carbohydrate degradation; glycolysis; D-glyceraldehyde 3-phosphate from glycerone phosphate: step 1/1. Functionally, involved in the gluconeogenesis. Catalyzes stereospecifically the conversion of dihydroxyacetone phosphate (DHAP) to D-glyceraldehyde-3-phosphate (G3P). This is Triosephosphate isomerase from Acidithiobacillus ferrooxidans (strain ATCC 23270 / DSM 14882 / CIP 104768 / NCIMB 8455) (Ferrobacillus ferrooxidans (strain ATCC 23270)).